A 280-amino-acid chain; its full sequence is Biotin carboxyl carrier protein of acetyl-CoA carboxylase 1, chloroplastic (280 aa).

Residues 1–82 (MASSSFSVTS…SNAAKVDGPS (82 aa)) constitute a chloroplast transit peptide. Positions 52-75 (PSRSSYPVVKAQSNKVSTGASSNA) are enriched in polar residues. Disordered stretches follow at residues 52 to 106 (PSRS…ATEE) and 164 to 215 (QPSY…GTFY). Low complexity predominate over residues 177–188 (PAAAAPAPSTPA). The span at 189 to 198 (SLPPPSPPTP) shows a compositional bias: pro residues. The Biotinyl-binding domain maps to 203–279 (LPTVKSPMAG…SLDTPLFVVQ (77 aa)). Residue Lys-245 is modified to N6-biotinyllysine.

In terms of assembly, acetyl-CoA carboxylase is a heterohexamer composed of biotin carboxyl carrier protein, biotin carboxylase and 2 subunits each of ACCase subunit alpha and ACCase plastid-coded subunit beta (accD). As to expression, present in developing tissues from roots, leaves, flowers, siliques and seeds (at protein level).

It localises to the plastid. It is found in the chloroplast. Its pathway is lipid metabolism; fatty acid biosynthesis. Its function is as follows. This protein is a component of the acetyl coenzyme A carboxylase complex; first, biotin carboxylase catalyzes the carboxylation of the carrier protein and then the transcarboxylase transfers the carboxyl group to form malonyl-CoA. In Arabidopsis thaliana (Mouse-ear cress), this protein is Biotin carboxyl carrier protein of acetyl-CoA carboxylase 1, chloroplastic (BCCP1).